We begin with the raw amino-acid sequence, 481 residues long: Aspartyl/glutamyl-tRNA(Asn/Gln) amidotransferase subunit B (481 aa).

Belongs to the GatB/GatE family. GatB subfamily. Heterotrimer of A, B and C subunits.

The enzyme catalyses L-glutamyl-tRNA(Gln) + L-glutamine + ATP + H2O = L-glutaminyl-tRNA(Gln) + L-glutamate + ADP + phosphate + H(+). The catalysed reaction is L-aspartyl-tRNA(Asn) + L-glutamine + ATP + H2O = L-asparaginyl-tRNA(Asn) + L-glutamate + ADP + phosphate + 2 H(+). Allows the formation of correctly charged Asn-tRNA(Asn) or Gln-tRNA(Gln) through the transamidation of misacylated Asp-tRNA(Asn) or Glu-tRNA(Gln) in organisms which lack either or both of asparaginyl-tRNA or glutaminyl-tRNA synthetases. The reaction takes place in the presence of glutamine and ATP through an activated phospho-Asp-tRNA(Asn) or phospho-Glu-tRNA(Gln). The chain is Aspartyl/glutamyl-tRNA(Asn/Gln) amidotransferase subunit B from Pseudomonas putida (strain W619).